We begin with the raw amino-acid sequence, 59 residues long: Large ribosomal subunit protein uL30 (59 aa).

This sequence belongs to the universal ribosomal protein uL30 family. In terms of assembly, part of the 50S ribosomal subunit.

This Clostridium botulinum (strain 657 / Type Ba4) protein is Large ribosomal subunit protein uL30.